Here is a 316-residue protein sequence, read N- to C-terminus: Olfactory receptor 10H4 (316 aa).

Residues 1–26 are Extracellular-facing; sequence MPSQNYSIISEFNLFGFSAFPQHLLP. Asn5 carries N-linked (GlcNAc...) asparagine glycosylation. Residues 27–47 traverse the membrane as a helical segment; it reads ILFLLYLLMFLFTLLGNLLIM. Residues 48–55 are Cytoplasmic-facing; it reads ATIWIEHR. A helical membrane pass occupies residues 56–76; that stretch reads LHTPMYLFLCTLSVSEILFTV. Residues 77–100 lie on the Extracellular side of the membrane; it reads AITPRMLADLLSTHHSITFVACAN. Cys98 and Cys190 form a disulfide bridge. A helical membrane pass occupies residues 101–121; sequence QMFFSFMFGFTHSFLLLVMGY. The Cytoplasmic portion of the chain corresponds to 122-140; it reads DRYVAICHPLRYNVLMSPR. The chain crosses the membrane as a helical span at residues 141-161; the sequence is DCAHLVACTWAGGSVMGMMVT. Topologically, residues 162 to 198 are extracellular; it reads TIVFHLTFCGSNVIHHFFCHVLSLLKLACENKTSSVI. Residues 199 to 219 traverse the membrane as a helical segment; the sequence is MGVMLVCVTALIGCLFLIILS. Topologically, residues 220 to 239 are cytoplasmic; sequence YVFIVAAILRIPSAEGRHKT. The chain crosses the membrane as a helical span at residues 240 to 260; the sequence is FSTCVSHLTVVVTHYSFASFI. Residues 261-273 lie on the Extracellular side of the membrane; the sequence is YLKPKGLHSMYSD. Residues 274-294 form a helical membrane-spanning segment; it reads ALMATTYTVFTPFLSPIIFSL. At 295–316 the chain is on the cytoplasmic side; that stretch reads RNKELKNAINKNFYRKFCPPSS.

It belongs to the G-protein coupled receptor 1 family.

It localises to the cell membrane. In terms of biological role, odorant receptor. This Homo sapiens (Human) protein is Olfactory receptor 10H4 (OR10H4).